A 367-amino-acid chain; its full sequence is Chorismate synthase (367 aa).

The interval 39–60 (EEFSHDLQRRASGKSRHTSARR) is disordered. The NADP(+) site is built by Arg48 and Arg54. Residues 125–127 (RSS), 238–239 (NA), Gly278, 293–297 (KPTSS), and Arg319 contribute to the FMN site.

It belongs to the chorismate synthase family. Homotetramer. Requires FMNH2 as cofactor.

It carries out the reaction 5-O-(1-carboxyvinyl)-3-phosphoshikimate = chorismate + phosphate. Its pathway is metabolic intermediate biosynthesis; chorismate biosynthesis; chorismate from D-erythrose 4-phosphate and phosphoenolpyruvate: step 7/7. In terms of biological role, catalyzes the anti-1,4-elimination of the C-3 phosphate and the C-6 proR hydrogen from 5-enolpyruvylshikimate-3-phosphate (EPSP) to yield chorismate, which is the branch point compound that serves as the starting substrate for the three terminal pathways of aromatic amino acid biosynthesis. This reaction introduces a second double bond into the aromatic ring system. This is Chorismate synthase from Xanthomonas oryzae pv. oryzae (strain MAFF 311018).